The primary structure comprises 555 residues: Sulfite reductase [ferredoxin] 2 (555 aa).

Positions 1-31 are disordered; sequence MTTARPAKARNEGQWALGNREPLNPNEEMKQ. A cross-link (3'-(S-cysteinyl)-tyrosine (Tyr-Cys)) is located at residues 69 to 161; that stretch reads YTQREQGYDG…AVGLRTTEAC (93 aa). 4 residues coordinate [4Fe-4S] cluster: cysteine 417, cysteine 423, cysteine 463, and cysteine 467. Cysteine 467 serves as a coordination point for siroheme.

The protein belongs to the nitrite and sulfite reductase 4Fe-4S domain family. Monomer. It depends on siroheme as a cofactor. [4Fe-4S] cluster serves as cofactor.

The catalysed reaction is hydrogen sulfide + 6 oxidized [2Fe-2S]-[ferredoxin] + 3 H2O = sulfite + 6 reduced [2Fe-2S]-[ferredoxin] + 7 H(+). Catalyzes the reduction of sulfite to sulfide, a step in the biosynthesis of sulfur-containing amino acids and cofactors. In Mycolicibacterium paratuberculosis (strain ATCC BAA-968 / K-10) (Mycobacterium paratuberculosis), this protein is Sulfite reductase [ferredoxin] 2 (sir2).